The following is a 95-amino-acid chain: Aspartyl/glutamyl-tRNA(Asn/Gln) amidotransferase subunit C (95 aa).

The protein belongs to the GatC family. Heterotrimer of A, B and C subunits.

It carries out the reaction L-glutamyl-tRNA(Gln) + L-glutamine + ATP + H2O = L-glutaminyl-tRNA(Gln) + L-glutamate + ADP + phosphate + H(+). The enzyme catalyses L-aspartyl-tRNA(Asn) + L-glutamine + ATP + H2O = L-asparaginyl-tRNA(Asn) + L-glutamate + ADP + phosphate + 2 H(+). Allows the formation of correctly charged Asn-tRNA(Asn) or Gln-tRNA(Gln) through the transamidation of misacylated Asp-tRNA(Asn) or Glu-tRNA(Gln) in organisms which lack either or both of asparaginyl-tRNA or glutaminyl-tRNA synthetases. The reaction takes place in the presence of glutamine and ATP through an activated phospho-Asp-tRNA(Asn) or phospho-Glu-tRNA(Gln). This chain is Aspartyl/glutamyl-tRNA(Asn/Gln) amidotransferase subunit C, found in Acidithiobacillus ferrooxidans (strain ATCC 23270 / DSM 14882 / CIP 104768 / NCIMB 8455) (Ferrobacillus ferrooxidans (strain ATCC 23270)).